The chain runs to 818 residues: LisH domain-containing protein ARMC9 (818 aa).

Positions 7-39 constitute a LisH domain; it reads HESELLGLVKEYLDFAEFEDTLKTFSKECKIKG. A coiled-coil region spans residues 204-230; it reads QSNKEILQQLHQQLVEAERRSVTYLKR. A Phosphoserine modification is found at serine 582. Disordered stretches follow at residues 642–755 and 790–818; these read VQWS…TTRE and SSCG…SHRK. The segment covering 701 to 711 has biased composition (low complexity); the sequence is STPESCVSSSS. Residues 792 to 818 show a composition bias toward polar residues; sequence CGPQQASRPGSTASSTRGLPSSQSHRK.

As to quaternary structure, interacts with TOGARAM1, CCDC66, CEP104, CSPP1 and CEP290. Interacts with NDUFAF2. Strongly expressed in most melanomas and melanocytes. Weakly expressed in the testis.

It is found in the cytoplasm. Its subcellular location is the cytoskeleton. The protein localises to the cilium basal body. It localises to the cell projection. The protein resides in the cilium. It is found in the microtubule organizing center. Its subcellular location is the centrosome. The protein localises to the centriole. In terms of biological role, involved in ciliogenesis. It is required for appropriate acetylation and polyglutamylation of ciliary microtubules, and regulation of cilium length. Acts as a positive regulator of hedgehog (Hh)signaling. May participate in the trafficking and/or retention of GLI2 and GLI3 proteins at the ciliary tip. This chain is LisH domain-containing protein ARMC9, found in Homo sapiens (Human).